A 422-amino-acid polypeptide reads, in one-letter code: AP-1 complex subunit mu-1-I (422 aa).

Residues 167–420 (KNEVFLDVIE…ITQNGEYEMR (254 aa)) form the MHD domain.

The protein belongs to the adaptor complexes medium subunit family. Adaptor protein complex 1 (AP-1) is a heterotetramer composed of two large adaptins (gamma- and beta'-type subunits), a medium adaptin (mu-type subunit AP47) and a small adaptin (sigma-type subunit AP19). Interacts (via N-terminus) with kvs-4. Expressed in the cholinergic motor neuron DA9.

Its subcellular location is the golgi apparatus. The protein localises to the cytoplasmic vesicle. The protein resides in the clathrin-coated vesicle membrane. It is found in the cell projection. It localises to the dendrite. Functionally, component of the adaptor complexes which link clathrin to receptors in coated vesicles. Clathrin-associated protein complexes are believed to interact with the cytoplasmic tails of membrane proteins, leading to their selection and concentration. Required for many aspects of development and behavior, including negative regulation of vulval differentiation. Required for the dendritic localization of potassium channel kvs-4 in the cholinergic motor neuron DA9. This is AP-1 complex subunit mu-1-I (unc-101) from Caenorhabditis elegans.